A 121-amino-acid polypeptide reads, in one-letter code: Flagellar protein FliT (121 aa).

Residues 1–50 (MNHAPHLYFAWQQLVEKSQLMLRLATEEQWDELIASEMAYVNAVQEIAHL) form a required for homodimerization region. The fliD binding stretch occupies residues 60–98 (MQEQLRPMLRLILDNESKVKQLLQIRMDELAKLVGQSSV).

Belongs to the FliT family. As to quaternary structure, homodimer. Interacts with FliD and FlhC.

The protein resides in the cytoplasm. It is found in the cytosol. Functionally, dual-function protein that regulates the transcription of class 2 flagellar operons and that also acts as an export chaperone for the filament-capping protein FliD. As a transcriptional regulator, acts as an anti-FlhDC factor; it directly binds FlhC, thus inhibiting the binding of the FlhC/FlhD complex to class 2 promoters, resulting in decreased expression of class 2 flagellar operons. As a chaperone, effects FliD transition to the membrane by preventing its premature polymerization, and by directing it to the export apparatus. This Escherichia coli O139:H28 (strain E24377A / ETEC) protein is Flagellar protein FliT.